We begin with the raw amino-acid sequence, 347 residues long: Protein RecA (347 aa).

67 to 74 (GPESSGKT) is an ATP binding site.

This sequence belongs to the RecA family.

The protein localises to the cytoplasm. In terms of biological role, can catalyze the hydrolysis of ATP in the presence of single-stranded DNA, the ATP-dependent uptake of single-stranded DNA by duplex DNA, and the ATP-dependent hybridization of homologous single-stranded DNAs. It interacts with LexA causing its activation and leading to its autocatalytic cleavage. The sequence is that of Protein RecA from Helicobacter pylori (strain HPAG1).